The following is a 322-amino-acid chain: Biotin synthase (322 aa).

The 228-residue stretch at 39–266 folds into the Radical SAM core domain; that stretch reads NQIQVSSLLN…KSVVRLSAGR (228 aa). Positions 54, 58, and 61 each coordinate [4Fe-4S] cluster. Cys-98, Cys-129, Cys-189, and Arg-261 together coordinate [2Fe-2S] cluster.

This sequence belongs to the radical SAM superfamily. Biotin synthase family. In terms of assembly, homodimer. The cofactor is [4Fe-4S] cluster. [2Fe-2S] cluster serves as cofactor.

It carries out the reaction (4R,5S)-dethiobiotin + (sulfur carrier)-SH + 2 reduced [2Fe-2S]-[ferredoxin] + 2 S-adenosyl-L-methionine = (sulfur carrier)-H + biotin + 2 5'-deoxyadenosine + 2 L-methionine + 2 oxidized [2Fe-2S]-[ferredoxin]. The protein operates within cofactor biosynthesis; biotin biosynthesis; biotin from 7,8-diaminononanoate: step 2/2. In terms of biological role, catalyzes the conversion of dethiobiotin (DTB) to biotin by the insertion of a sulfur atom into dethiobiotin via a radical-based mechanism. The protein is Biotin synthase of Ruthia magnifica subsp. Calyptogena magnifica.